The primary structure comprises 202 residues: Thymidylate kinase (202 aa).

Position 13 to 20 (13 to 20 (GTDGAGKS)) interacts with ATP.

It belongs to the thymidylate kinase family.

It carries out the reaction dTMP + ATP = dTDP + ADP. Phosphorylation of dTMP to form dTDP in both de novo and salvage pathways of dTTP synthesis. This chain is Thymidylate kinase, found in Desulfotalea psychrophila (strain LSv54 / DSM 12343).